The primary structure comprises 318 residues: Isoaspartyl peptidase/L-asparaginase (318 aa).

Residue Thr180 is the Nucleophile of the active site. Residues 208–211 (RVSD) and 229–232 (TGIG) each bind substrate.

Belongs to the Ntn-hydrolase family. In terms of assembly, heterotetramer of two alpha and two beta chains arranged as a dimer of alpha/beta heterodimers. In terms of processing, cleaved into an alpha and beta chain by autocatalysis; this activates the enzyme. The N-terminal residue of the beta subunit is responsible for the nucleophile hydrolase activity.

The catalysed reaction is Cleavage of a beta-linked Asp residue from the N-terminus of a polypeptide.. In terms of biological role, degrades proteins damaged by L-isoaspartyl residue formation (also known as beta-Asp residues). Probably performs the final step in the degradation of the reserve polymer cyanophycin (depolymerizes the building block L-beta-Asp-Arg). Also has L-asparaginase activity. The polypeptide is Isoaspartyl peptidase/L-asparaginase (Nostoc sp. (strain PCC 7120 / SAG 25.82 / UTEX 2576)).